The following is an 887-amino-acid chain: Valine--tRNA ligase (887 aa).

The 'HIGH' region motif lies at 48–58; sequence PNVTGVLHVGH. The short motif at 527–531 is the 'KMSKS' region element; that stretch reads KMSKS. Lysine 530 contributes to the ATP binding site. The stretch at 814–887 forms a coiled coil; it reads LAGLVDIEAE…EASDRLKKLS (74 aa).

Belongs to the class-I aminoacyl-tRNA synthetase family. ValS type 1 subfamily. Monomer.

It is found in the cytoplasm. It carries out the reaction tRNA(Val) + L-valine + ATP = L-valyl-tRNA(Val) + AMP + diphosphate. Its function is as follows. Catalyzes the attachment of valine to tRNA(Val). As ValRS can inadvertently accommodate and process structurally similar amino acids such as threonine, to avoid such errors, it has a 'posttransfer' editing activity that hydrolyzes mischarged Thr-tRNA(Val) in a tRNA-dependent manner. The sequence is that of Valine--tRNA ligase from Desulfotalea psychrophila (strain LSv54 / DSM 12343).